We begin with the raw amino-acid sequence, 296 residues long: Bifunctional protein FolD (296 aa).

NADP(+) is bound by residues 168 to 170 (GRS), T197, and V238.

It belongs to the tetrahydrofolate dehydrogenase/cyclohydrolase family. As to quaternary structure, homodimer.

The enzyme catalyses (6R)-5,10-methylene-5,6,7,8-tetrahydrofolate + NADP(+) = (6R)-5,10-methenyltetrahydrofolate + NADPH. It catalyses the reaction (6R)-5,10-methenyltetrahydrofolate + H2O = (6R)-10-formyltetrahydrofolate + H(+). The protein operates within one-carbon metabolism; tetrahydrofolate interconversion. Catalyzes the oxidation of 5,10-methylenetetrahydrofolate to 5,10-methenyltetrahydrofolate and then the hydrolysis of 5,10-methenyltetrahydrofolate to 10-formyltetrahydrofolate. The protein is Bifunctional protein FolD of Desulfotalea psychrophila (strain LSv54 / DSM 12343).